The chain runs to 157 residues: Large ribosomal subunit protein eL24 (157 aa).

Residues 94-157 form a disordered region; sequence RNQKPEVRKA…ISAPRVGGKR (64 aa). A compositionally biased stretch (basic and acidic residues) spans 96 to 117; the sequence is QKPEVRKAQREQAIRAAKEAKK. Positions 123-140 are enriched in low complexity; the sequence is KKPAAPSAKASTKTAQKP.

It belongs to the eukaryotic ribosomal protein eL24 family. In terms of assembly, component of the large ribosomal subunit.

It is found in the cytoplasm. Functionally, component of the large ribosomal subunit. The ribosome is a large ribonucleoprotein complex responsible for the synthesis of proteins in the cell. The protein is Large ribosomal subunit protein eL24 (rpl24) of Pagrus major (Red sea bream).